The following is a 51-amino-acid chain: Large ribosomal subunit protein bL33 (51 aa).

The tract at residues 1–24 (MREKIRLNSSAGTGHFYTTDKNKR) is disordered.

The protein belongs to the bacterial ribosomal protein bL33 family.

The chain is Large ribosomal subunit protein bL33 from Cellvibrio japonicus (strain Ueda107) (Pseudomonas fluorescens subsp. cellulosa).